A 334-amino-acid polypeptide reads, in one-letter code: UDP-glucose 4-epimerase (334 aa).

NAD(+) is bound by residues 11–12, 31–36, 50–51, 72–76, Asn-91, Thr-116, Tyr-140, Lys-144, and Phe-168; these read YI, DNLQKG, DI, and FAANS. Residues Thr-116 and Tyr-140 each coordinate substrate. Tyr-140 functions as the Proton acceptor in the catalytic mechanism. Residues Asn-169, 188–189, 205–207, Arg-220, and 281–284 each bind substrate; these read HL, AIF, and RSGD.

This sequence belongs to the NAD(P)-dependent epimerase/dehydratase family. As to quaternary structure, homodimer. Requires NAD(+) as cofactor.

It catalyses the reaction UDP-alpha-D-glucose = UDP-alpha-D-galactose. Its pathway is carbohydrate metabolism; galactose metabolism. Functionally, involved in the metabolism of galactose. Catalyzes the conversion of UDP-galactose (UDP-Gal) to UDP-glucose (UDP-Glc) through a mechanism involving the transient reduction of NAD. The protein is UDP-glucose 4-epimerase (galE) of Halalkalibacterium halodurans (strain ATCC BAA-125 / DSM 18197 / FERM 7344 / JCM 9153 / C-125) (Bacillus halodurans).